Here is a 348-residue protein sequence, read N- to C-terminus: Outer membrane protein assembly factor BamC (348 aa).

The signal sequence occupies residues 1–24; sequence MATLLQTSKVMKVAGLSLVVFLAA. Cys-25 is lipidated: N-palmitoyl cysteine. Cys-25 carries S-diacylglycerol cysteine lipidation. A disordered region spans residues 211–230; the sequence is SQQQEEAGQNNAKDSGALTV.

The protein belongs to the BamC family. Part of the Bam complex, which is composed of the outer membrane protein BamA, and four lipoproteins BamB, BamC, BamD and BamE.

It is found in the cell outer membrane. Functionally, part of the outer membrane protein assembly complex, which is involved in assembly and insertion of beta-barrel proteins into the outer membrane. This is Outer membrane protein assembly factor BamC from Xenorhabdus nematophila (strain ATCC 19061 / DSM 3370 / CCUG 14189 / LMG 1036 / NCIMB 9965 / AN6).